The primary structure comprises 248 residues: UPF0246 protein A1I_02510 (248 aa).

Belongs to the UPF0246 family.

In Rickettsia bellii (strain OSU 85-389), this protein is UPF0246 protein A1I_02510.